Reading from the N-terminus, the 52-residue chain is UPF0391 membrane protein XCV0245 (52 aa).

2 consecutive transmembrane segments (helical) span residues 5–25 and 27–47; these read AIIF…GIAG and ATNI…ISMF.

It belongs to the UPF0391 family.

It is found in the cell membrane. In Xanthomonas euvesicatoria pv. vesicatoria (strain 85-10) (Xanthomonas campestris pv. vesicatoria), this protein is UPF0391 membrane protein XCV0245.